Reading from the N-terminus, the 335-residue chain is Glyceraldehyde-3-phosphate dehydrogenase (335 aa).

NAD(+)-binding positions include 11–12 (RI), Asp-33, and Lys-78. D-glyceraldehyde 3-phosphate is bound by residues 148–150 (SST), Thr-179, 208–209 (TG), and Arg-231. Residue Asn-313 coordinates NAD(+).

This sequence belongs to the glyceraldehyde-3-phosphate dehydrogenase family. As to quaternary structure, homotetramer.

It is found in the cytoplasm. The enzyme catalyses D-glyceraldehyde 3-phosphate + phosphate + NAD(+) = (2R)-3-phospho-glyceroyl phosphate + NADH + H(+). It functions in the pathway carbohydrate degradation; glycolysis; pyruvate from D-glyceraldehyde 3-phosphate: step 1/5. This Pleurotus sajor-caju (Oyster mushroom) protein is Glyceraldehyde-3-phosphate dehydrogenase (GPD).